A 379-amino-acid polypeptide reads, in one-letter code: UDP-4-amino-4-deoxy-L-arabinose--oxoglutarate aminotransferase (379 aa).

K182 bears the N6-(pyridoxal phosphate)lysine mark.

It belongs to the DegT/DnrJ/EryC1 family. ArnB subfamily. As to quaternary structure, homodimer. Pyridoxal 5'-phosphate serves as cofactor.

It catalyses the reaction UDP-4-amino-4-deoxy-beta-L-arabinose + 2-oxoglutarate = UDP-beta-L-threo-pentopyranos-4-ulose + L-glutamate. It functions in the pathway nucleotide-sugar biosynthesis; UDP-4-deoxy-4-formamido-beta-L-arabinose biosynthesis; UDP-4-deoxy-4-formamido-beta-L-arabinose from UDP-alpha-D-glucuronate: step 2/3. The protein operates within bacterial outer membrane biogenesis; lipopolysaccharide biosynthesis. Its function is as follows. Catalyzes the conversion of UDP-4-keto-arabinose (UDP-Ara4O) to UDP-4-amino-4-deoxy-L-arabinose (UDP-L-Ara4N). The modified arabinose is attached to lipid A and is required for resistance to polymyxin and cationic antimicrobial peptides. This is UDP-4-amino-4-deoxy-L-arabinose--oxoglutarate aminotransferase from Escherichia coli O1:K1 / APEC.